We begin with the raw amino-acid sequence, 571 residues long: Protein dead ringer homolog (571 aa).

2 disordered regions span residues 45-117 and 190-229; these read QHQQ…EPDK and KRMQ…SCNG. The span at 49–77 shows a compositional bias: basic and acidic residues; that stretch reads RMMEQHKNDDVISNDVRCDDFSDGGERQR. The segment covering 195–206 has biased composition (polar residues); the sequence is DHNIQQSTNHIP. Residues 207–224 show a composition bias toward low complexity; the sequence is TPSSASSHTSSGSVTSQT. One can recognise an ARID domain in the interval 249 to 341; sequence DIKRKEFLDD…YLYPFECERE (93 aa). Over residues 459-471 the composition is skewed to low complexity; sequence AAHHAAQQAAQHQ. The interval 459-528 is disordered; that stretch reads AAHHAAQQAA…GDRGRHNEMS (70 aa). Residues 473 to 558 form the REKLES domain; it reads SLKKEIDSDY…GVLFAHSPNH (86 aa). Composition is skewed to basic and acidic residues over residues 487-507 and 518-527; these read PPEK…DNQR and MGDRGRHNEM.

The protein localises to the nucleus. Its function is as follows. Transcription factor. This Ciona intestinalis (Transparent sea squirt) protein is Protein dead ringer homolog (Ci-DRIL1/2).